The following is a 791-amino-acid chain: Nuclear cap-binding protein subunit 1 (791 aa).

Over residues 1–14 the composition is skewed to basic and acidic residues; sequence MSRRRHSDENDGGP. Residues 1–24 are disordered; sequence MSRRRHSDENDGGPHHKRRKTSEP. Positions 28–240 constitute an MIF4G domain; it reads EDRLESLICR…CLWAQIQKLK (213 aa). The stretch at 641-714 forms a coiled coil; it reads LHSTIRKMNK…SEQKNLFLVI (74 aa). The tract at residues 668-687 is disordered; the sequence is KQHKHRDSDDNDEDSGRKDG.

Belongs to the NCBP1 family. As to quaternary structure, component of the nuclear cap-binding complex (CBC), a heterodimer composed of ncbp1/cbp80 and ncbp2/cbp20 that interacts with m7GpppG-capped RNA. Component of an alternative nuclear cap-binding complex (CBC) composed of ncbp1/cbp80 and ncbp3.

The protein resides in the nucleus. It localises to the cytoplasm. Functionally, component of the cap-binding complex (CBC), which binds cotranscriptionally to the 5'-cap of pre-mRNAs and is involved in various processes such as pre-mRNA splicing, translation regulation, nonsense-mediated mRNA decay, RNA-mediated gene silencing (RNAi) by microRNAs (miRNAs) and mRNA export. The CBC complex is involved in mRNA export from the nucleus, leading to the recruitment of the mRNA export machinery to the 5'-end of mRNA and to mRNA export in a 5' to 3' direction through the nuclear pore. The CBC complex is also involved in mediating U snRNA and intronless mRNAs export from the nucleus. The CBC complex is essential for a pioneer round of mRNA translation, before steady state translation when the CBC complex is replaced by cytoplasmic cap-binding protein eIF4E. The pioneer round of mRNA translation mediated by the CBC complex plays a central role in nonsense-mediated mRNA decay (NMD), NMD only taking place in mRNAs bound to the CBC complex, but not on eIF4E-bound mRNAs. The CBC complex enhances NMD in mRNAs containing at least one exon-junction complex (EJC), promoting the interaction between UPF1 and UPF2. The CBC complex is also involved in 'failsafe' NMD, which is independent of the EJC complex, while it does not participate in Staufen-mediated mRNA decay (SMD). During cell proliferation, the CBC complex is also involved in microRNAs (miRNAs) biogenesis via its interaction with SRRT/ARS2 and is required for miRNA-mediated RNA interference. The CBC complex also acts as a negative regulator of parn, thereby acting as an inhibitor of mRNA deadenylation. In the CBC complex, ncbp1/cbp80 does not bind directly capped RNAs (m7GpppG-capped RNA) but is required to stabilize the movement of the N-terminal loop of ncbp2/cbp20 and lock the CBC into a high affinity cap-binding state with the cap structure. Associates with NCBP3 to form an alternative cap-binding complex (CBC) which plays a key role in mRNA export. The conventional CBC with NCBP2 binds both small nuclear RNA (snRNA) and messenger (mRNA) and is involved in their export from the nucleus whereas the alternative CBC with NCBP3 does not bind snRNA and associates only with mRNA thereby playing a role only in mRNA export. This chain is Nuclear cap-binding protein subunit 1 (ncbp1), found in Xenopus tropicalis (Western clawed frog).